Reading from the N-terminus, the 337-residue chain is Large ribosomal subunit protein uL3 (337 aa).

It belongs to the universal ribosomal protein uL3 family. In terms of assembly, part of the 50S ribosomal subunit. Forms a cluster with proteins L14 and L24e.

One of the primary rRNA binding proteins, it binds directly near the 3'-end of the 23S rRNA, where it nucleates assembly of the 50S subunit. This is Large ribosomal subunit protein uL3 from Methanospirillum hungatei JF-1 (strain ATCC 27890 / DSM 864 / NBRC 100397 / JF-1).